Reading from the N-terminus, the 125-residue chain is Large ribosomal subunit protein bL12 (125 aa).

It belongs to the bacterial ribosomal protein bL12 family. As to quaternary structure, homodimer. Part of the ribosomal stalk of the 50S ribosomal subunit. Forms a multimeric L10(L12)X complex, where L10 forms an elongated spine to which 2 to 4 L12 dimers bind in a sequential fashion. Binds GTP-bound translation factors.

Functionally, forms part of the ribosomal stalk which helps the ribosome interact with GTP-bound translation factors. Is thus essential for accurate translation. The polypeptide is Large ribosomal subunit protein bL12 (Alkalilimnicola ehrlichii (strain ATCC BAA-1101 / DSM 17681 / MLHE-1)).